The following is a 358-amino-acid chain: NADH-quinone oxidoreductase subunit H (358 aa).

8 helical membrane-spanning segments follow: residues 30–50 (IVIG…MIFM), 96–116 (FLYN…FSCL), 129–149 (VGIF…LLAG), 165–185 (GAQM…IVIL), 201–221 (GWFL…YLIA), 264–284 (LFII…PLHI), 297–317 (IPGF…LMWI), and 336–356 (YLVP…VFKL).

It belongs to the complex I subunit 1 family. NDH-1 is composed of 14 different subunits. Subunits NuoA, H, J, K, L, M, N constitute the membrane sector of the complex.

It is found in the cell inner membrane. The catalysed reaction is a quinone + NADH + 5 H(+)(in) = a quinol + NAD(+) + 4 H(+)(out). Its function is as follows. NDH-1 shuttles electrons from NADH, via FMN and iron-sulfur (Fe-S) centers, to quinones in the respiratory chain. The immediate electron acceptor for the enzyme in this species is believed to be ubiquinone. Couples the redox reaction to proton translocation (for every two electrons transferred, four hydrogen ions are translocated across the cytoplasmic membrane), and thus conserves the redox energy in a proton gradient. This subunit may bind ubiquinone. The sequence is that of NADH-quinone oxidoreductase subunit H from Phocaeicola vulgatus (strain ATCC 8482 / DSM 1447 / JCM 5826 / CCUG 4940 / NBRC 14291 / NCTC 11154) (Bacteroides vulgatus).